Consider the following 86-residue polypeptide: Probable acyl carrier protein CCNA_01221 (86 aa).

One can recognise a Carrier domain in the interval 6 to 83 (TVTDLSLREI…DLSKLINDLR (78 aa)). O-(pantetheine 4'-phosphoryl)serine is present on serine 43.

The protein belongs to the acyl carrier protein (ACP) family.

It participates in lipid metabolism; sphingolipid metabolism. Involved in de novo bacterial ceramide synthesis. In Caulobacter vibrioides (strain NA1000 / CB15N) (Caulobacter crescentus), this protein is Probable acyl carrier protein CCNA_01221.